Reading from the N-terminus, the 137-residue chain is uncharacterized protein (137 aa).

Residues 75-91 traverse the membrane as a helical segment; sequence MFLDAMVILAVASGVSL. The interval 93–116 is disordered; that stretch reads PQLPGRRSHNASTPGAKKPGKDHG.

The protein localises to the membrane. This is an uncharacterized protein from Saccharomyces cerevisiae (strain ATCC 204508 / S288c) (Baker's yeast).